Consider the following 454-residue polypeptide: UDP-N-acetylmuramoylalanine--D-glutamate ligase (454 aa).

Position 114-120 (114-120 (GTNGKTT)) interacts with ATP.

It belongs to the MurCDEF family.

It localises to the cytoplasm. It catalyses the reaction UDP-N-acetyl-alpha-D-muramoyl-L-alanine + D-glutamate + ATP = UDP-N-acetyl-alpha-D-muramoyl-L-alanyl-D-glutamate + ADP + phosphate + H(+). The protein operates within cell wall biogenesis; peptidoglycan biosynthesis. Its function is as follows. Cell wall formation. Catalyzes the addition of glutamate to the nucleotide precursor UDP-N-acetylmuramoyl-L-alanine (UMA). This is UDP-N-acetylmuramoylalanine--D-glutamate ligase from Desulfitobacterium hafniense (strain DSM 10664 / DCB-2).